Reading from the N-terminus, the 256-residue chain is Pimeloyl-[acyl-carrier protein] methyl ester esterase (256 aa).

Residues 15-242 (HLVLLHGWGL…AAHAPFISHP (228 aa)) enclose the AB hydrolase-1 domain. Substrate is bound by residues Trp-22, 82–83 (SL), and 143–147 (FLALQ). Ser-82 acts as the Nucleophile in catalysis. Residues Asp-207 and His-235 contribute to the active site. His-235 contacts substrate.

Belongs to the AB hydrolase superfamily. Carboxylesterase BioH family. In terms of assembly, monomer.

The protein localises to the cytoplasm. The catalysed reaction is 6-carboxyhexanoyl-[ACP] methyl ester + H2O = 6-carboxyhexanoyl-[ACP] + methanol + H(+). It functions in the pathway cofactor biosynthesis; biotin biosynthesis. Its function is as follows. The physiological role of BioH is to remove the methyl group introduced by BioC when the pimeloyl moiety is complete. It allows to synthesize pimeloyl-ACP via the fatty acid synthetic pathway through the hydrolysis of the ester bonds of pimeloyl-ACP esters. This is Pimeloyl-[acyl-carrier protein] methyl ester esterase from Salmonella choleraesuis (strain SC-B67).